Reading from the N-terminus, the 629-residue chain is Solute carrier family 22 member 14 (629 aa).

Residues M1–R21 are disordered. Residues M1–R67 are Cytoplasmic-facing. Residues Y7–S16 show a composition bias toward polar residues. A helical membrane pass occupies residues L68 to F88. The Extracellular segment spans residues L89–E183. N98, N116, N124, and N149 each carry an N-linked (GlcNAc...) asparagine glycan. The chain crosses the membrane as a helical span at residues N184–S204. The Cytoplasmic segment spans residues D205–R209. Residues Y210–V230 traverse the membrane as a helical segment. The Extracellular segment spans residues S231–R240. A helical membrane pass occupies residues F241 to W261. At L262–Q269 the chain is on the cytoplasmic side. The chain crosses the membrane as a helical span at residues A270–Y290. At K291 to W295 the chain is on the extracellular side. A helical membrane pass occupies residues R296–L316. Topologically, residues R317–K378 are cytoplasmic. Residues V379–L399 traverse the membrane as a helical segment. The Extracellular segment spans residues K400–Y409. Residues F410–L430 traverse the membrane as a helical segment. Residues E431–K436 are Cytoplasmic-facing. A helical membrane pass occupies residues W437 to P457. Topologically, residues Q458–T463 are extracellular. A helical membrane pass occupies residues I464–I484. The Cytoplasmic portion of the chain corresponds to Y485–S496. The chain crosses the membrane as a helical span at residues T497–F517. At K518–Q523 the chain is on the extracellular side. The chain crosses the membrane as a helical span at residues L524–P544. At E545–P629 the chain is on the cytoplasmic side.

The protein belongs to the major facilitator (TC 2.A.1) superfamily. Organic cation transporter (TC 2.A.1.19) family. As to expression, testis-specific (at protein level). Specifically expressed in male germ cells (at protein level).

The protein localises to the mitochondrion inner membrane. Its subcellular location is the cell projection. It is found in the cilium. It localises to the flagellum membrane. The enzyme catalyses riboflavin(in) = riboflavin(out). Its function is as follows. Riboflavin transporter localized at the inner mitochondrial membrane of the spermatozoa midpiece, which is required for male fertility. SLC22A14-mediated riboflavin transport is essential for spermatozoa energy generation and motility: riboflavin is the precursor of FMN and FAD, which are coenzymes of many enzymes in the TCA cycle (the citric acid cycle) in mitochondria. Required for sperm motility and normal sperm flagellar structure. The sequence is that of Solute carrier family 22 member 14 from Mus musculus (Mouse).